A 385-amino-acid chain; its full sequence is MHMPKGFLSFGINIGIKDDTKDFGVIYSEIPCKATAVFTKNNFPGAPVIVGKEHVRSGVLQAIVINSKNSNVATGEKGIQNSREICKIIGESLGIKETLVLPSSTGVIGVPLKMEIILPACKKAKSLLKPGNLEEVAEAIMTTDTRKKISSRNIKTKSGQGTIYGIAKGAGMIEPNMATMLCYILSDVSLPEGTDLYSILKSSVDQSFNCLTIDSDTSTSDTVALLCNGLSGESSVQDFSKALTEICIDLTKLIATDGEGATKLIELTISGAKSEAQARKIGKSILNSPLVKTAIYGGDPNWGRLIMAVGKVFDEPIPFEGLQIYFGTLPVKEANPETLKKLSEYLKNNTEISLNVVLNVGTISMKFWGCDFTEKYIEENAYYTT.

Substrate is bound by residues threonine 142, lysine 168, threonine 179, glutamate 259, asparagine 380, and threonine 385. The Nucleophile role is filled by threonine 179.

Belongs to the ArgJ family. As to quaternary structure, heterotetramer of two alpha and two beta chains.

It localises to the cytoplasm. The catalysed reaction is N(2)-acetyl-L-ornithine + L-glutamate = N-acetyl-L-glutamate + L-ornithine. The enzyme catalyses L-glutamate + acetyl-CoA = N-acetyl-L-glutamate + CoA + H(+). It functions in the pathway amino-acid biosynthesis; L-arginine biosynthesis; L-ornithine and N-acetyl-L-glutamate from L-glutamate and N(2)-acetyl-L-ornithine (cyclic): step 1/1. Its pathway is amino-acid biosynthesis; L-arginine biosynthesis; N(2)-acetyl-L-ornithine from L-glutamate: step 1/4. Catalyzes two activities which are involved in the cyclic version of arginine biosynthesis: the synthesis of N-acetylglutamate from glutamate and acetyl-CoA as the acetyl donor, and of ornithine by transacetylation between N(2)-acetylornithine and glutamate. The sequence is that of Arginine biosynthesis bifunctional protein ArgJ from Leptospira interrogans serogroup Icterohaemorrhagiae serovar Lai (strain 56601).